Here is a 177-residue protein sequence, read N- to C-terminus: Putative rubredoxin (177 aa).

Residues 1 to 38 (MKICRICGYQIPEGEFNLLEDGWVCPRCGVGKEELQDS) form the Rubredoxin-like domain. 4 residues coordinate Fe cation: cysteine 4, cysteine 7, cysteine 25, and cysteine 28.

The protein belongs to the rubredoxin family. The cofactor is Fe(3+).

The protein is Putative rubredoxin (rdxA) of Methanothermobacter thermautotrophicus (strain ATCC 29096 / DSM 1053 / JCM 10044 / NBRC 100330 / Delta H) (Methanobacterium thermoautotrophicum).